A 464-amino-acid chain; its full sequence is NADH dehydrogenase [ubiquinone] flavoprotein 1, mitochondrial (464 aa).

Residues 1–20 (MLAARRLLGGSLPSRVSVRF) constitute a mitochondrion transit peptide. N6-acetyllysine; alternate is present on Lys-81. Lys-81 is modified (N6-succinyllysine; alternate). 87-96 (GRGGAGFPTG) is a binding site for NADH. At Lys-104 the chain carries N6-acetyllysine. 199–247 (RGAGAYICGEETALIESIEGKQGKPRLKPPFPADVGVFGCPTTVANVET) serves as a coordination point for FMN. Residue Arg-257 is modified to Omega-N-methylarginine. Lys-375 is subject to N6-acetyllysine. [4Fe-4S] cluster-binding residues include Cys-379, Cys-382, Cys-385, and Cys-425.

This sequence belongs to the complex I 51 kDa subunit family. Core subunit of respiratory chain NADH dehydrogenase (Complex I) which is composed of 45 different subunits. This is a component of the flavoprotein-sulfur (FP) fragment of the enzyme. Interacts with RAB5IF. It depends on FMN as a cofactor. Requires [4Fe-4S] cluster as cofactor.

The protein resides in the mitochondrion inner membrane. It catalyses the reaction a ubiquinone + NADH + 5 H(+)(in) = a ubiquinol + NAD(+) + 4 H(+)(out). Its function is as follows. Core subunit of the mitochondrial membrane respiratory chain NADH dehydrogenase (Complex I) which catalyzes electron transfer from NADH through the respiratory chain, using ubiquinone as an electron acceptor. Part of the peripheral arm of the enzyme, where the electrons from NADH are accepted by flavin mononucleotide (FMN) and then passed along a chain of iron-sulfur clusters by electron tunnelling to the final acceptor ubiquinone. Contains FMN, which is the initial electron acceptor as well as one iron-sulfur cluster. The polypeptide is NADH dehydrogenase [ubiquinone] flavoprotein 1, mitochondrial (Macaca fascicularis (Crab-eating macaque)).